A 475-amino-acid chain; its full sequence is Ribosomal RNA small subunit methyltransferase F (475 aa).

Residues 125-131, Glu-149, Asp-176, and Asp-194 each bind S-adenosyl-L-methionine; that span reads AAAPGSK. Cys-247 serves as the catalytic Nucleophile.

Belongs to the class I-like SAM-binding methyltransferase superfamily. RsmB/NOP family.

It localises to the cytoplasm. It carries out the reaction cytidine(1407) in 16S rRNA + S-adenosyl-L-methionine = 5-methylcytidine(1407) in 16S rRNA + S-adenosyl-L-homocysteine + H(+). Specifically methylates the cytosine at position 1407 (m5C1407) of 16S rRNA. The chain is Ribosomal RNA small subunit methyltransferase F from Aeromonas hydrophila subsp. hydrophila (strain ATCC 7966 / DSM 30187 / BCRC 13018 / CCUG 14551 / JCM 1027 / KCTC 2358 / NCIMB 9240 / NCTC 8049).